A 571-amino-acid chain; its full sequence is Exodeoxyribonuclease 1 (571 aa).

The tract at residues 1–96 (MGIKGLLGLL…STEQKRKERR (96 aa)) is N-domain. The Mg(2+) site is built by aspartate 30, aspartate 78, glutamate 150, aspartate 152, aspartate 171, aspartate 173, and aspartate 225. The interval 114–245 (QAIMQFSRCV…KTALRYLQKY (132 aa)) is I-domain. Disordered regions lie at residues 464–489 (KEID…SASP) and 530–559 (RKNH…NPRP). Polar residues predominate over residues 470–489 (VPSQSNNTTPTSAKSDSASP).

It belongs to the XPG/RAD2 endonuclease family. EXO1 subfamily. As to quaternary structure, monomer. The cofactor is Mg(2+).

It is found in the nucleus. In terms of biological role, 5'-&gt;3' double-stranded DNA exonuclease that could act in a pathway that corrects mismatched base pairs. In Schizosaccharomyces pombe (strain 972 / ATCC 24843) (Fission yeast), this protein is Exodeoxyribonuclease 1 (exo1).